The following is a 341-amino-acid chain: Processive diacylglycerol beta-glycosyltransferase (341 aa).

The protein belongs to the glycosyltransferase 2 family. It depends on Mg(2+) as a cofactor.

The protein resides in the cell membrane. It carries out the reaction a 1,2-diacyl-sn-glycerol + UDP-alpha-D-glucose = a 1,2-diacyl-3-O-(beta-D-glucopyranosyl)-sn-glycerol + UDP + H(+). The enzyme catalyses a 1,2-diacyl-sn-glycerol + UDP-alpha-D-galactose = a 1,2-diacyl-3-O-(beta-D-galactosyl)-sn-glycerol + UDP + H(+). The catalysed reaction is a 1,2-diacyl-3-O-(beta-D-glucopyranosyl)-sn-glycerol + UDP-alpha-D-glucose = a 1,2-diacyl-3-O-(beta-D-Glc-(1-&gt;6)-beta-D-Glc)-sn-glycerol + UDP + H(+). It catalyses the reaction a 1,2-diacyl-3-O-(beta-D-galactosyl)-sn-glycerol + UDP-alpha-D-galactose = a 1,2-diacyl-3-O-[beta-D-galactosyl-(1-&gt;6)-beta-D-galactosyl]-sn-glycerol + UDP + H(+). Its pathway is glycolipid metabolism; diglucosyl-diacylglycerol biosynthesis. Its activity is regulated as follows. Activated by the negatively charged lipid dioleoylphosphatidylglycerol (DOPG) and inhibited by N-(n-nonyl)deoxygalactonojirimycin (C9J). Its function is as follows. Processive glycosyltransferase involved in the biosynthesis of both the non-bilayer-prone beta-monoglycosyldiacylglycerol and the bilayer-forming membrane lipid beta-diglycosyldiacylglycerol. These components contribute to regulate the properties and stability of the membrane. Catalyzes sequentially the transfers of glucosyl or galactosyl residues from UDP-Glc or UDP-Gal to diacylglycerol (DAG) acceptor to form the corresponding beta-glycosyl-DAG (3-O-(beta-D-glycopyranosyl)-1,2-diacyl-sn-glycerol), which then acts as acceptor to give beta-diglycosyl-DAG product (3-O-(beta-D-glycopyranosyl-beta-(1-&gt;6)-D-glycopyranosyl)-1,2-diacyl-sn-glycerol). Dioleoylglycerol (DOG) is a preferred sugar acceptor than 3-O-(beta-D-glucopyranosyl)-1,2-dioleoyl-sn-glycerol. In Mycoplasma genitalium (strain ATCC 33530 / DSM 19775 / NCTC 10195 / G37) (Mycoplasmoides genitalium), this protein is Processive diacylglycerol beta-glycosyltransferase.